The primary structure comprises 53 residues: UPF0391 membrane protein BURPS1106A_A2993 (53 aa).

2 consecutive transmembrane segments (helical) span residues 5–25 and 30–50; these read ALIFFIIAIIAAVLGFGGIAA and IAKILFYIFVVIFLVTLVLGV.

It belongs to the UPF0391 family.

Its subcellular location is the cell membrane. The sequence is that of UPF0391 membrane protein BURPS1106A_A2993 from Burkholderia pseudomallei (strain 1106a).